Reading from the N-terminus, the 210-residue chain is Selenoprotein T2 (210 aa).

The signal sequence occupies residues 1–21 (MAEYSQTGILTALLLFTVVTV). Residues 62–65 (CISU) constitute a cross-link (cysteinyl-selenocysteine (Cys-Sec)). U65 is a non-standard amino acid (selenocysteine).

It belongs to the SelWTH family. Selenoprotein T subfamily. Post-translationally, may contain a selenide-sulfide bond between Cys-62 and Sec-65. This bond is speculated to serve as redox-active pair. Widely expressed in the embryo.

This chain is Selenoprotein T2, found in Danio rerio (Zebrafish).